Consider the following 421-residue polypeptide: Zinc metalloproteinase-disintegrin-like lachestatin-1 (421 aa).

The Peptidase M12B domain maps to 10 to 206 (KYVKLVLVAD…DMPQCILEKP (197 aa)). Disulfide bonds link C121–C201, C161–C185, and C163–C168. H146 lines the Zn(2+) pocket. E147 is an active-site residue. Residues H150 and H156 each contribute to the Zn(2+) site. The Disintegrin domain maps to 214–299 (PPVCGNYFVE…AECTDRFQRN (86 aa)). The Ca(2+) site is built by V216, N219, F221, E223, E226, and D229. 14 disulfides stabilise this stretch: C217-C246, C228-C241, C230-C236, C240-C263, C254-C260, C259-C285, C272-C292, C279-C310, C303-C315, C322-C372, C337-C383, C350-C360, C367-C409, and C403-C414. The D/ECD-tripeptide motif lies at 278-280 (ECD). Ca(2+) is bound by residues D280, M281, D283, D294, and R295. N-linked (GlcNAc...) asparagine glycosylation occurs at N312.

The protein belongs to the venom metalloproteinase (M12B) family. P-III subfamily. P-IIIc sub-subfamily. Homodimer; disulfide-linked. Requires Zn(2+) as cofactor. In terms of tissue distribution, expressed by the venom gland.

It is found in the secreted. Its function is as follows. Snake venom zinc metalloprotease that induces apoptosis in vascular endothelial cells (VEC), without degrading the extracellular matrix (it cannot cleave collagen) or inhibiting adhesion of VEC. Has also fibrinogenolytic and hemorrhagic activities. This is Zinc metalloproteinase-disintegrin-like lachestatin-1 from Lachesis muta rhombeata (Bushmaster).